Here is a 496-residue protein sequence, read N- to C-terminus: Glutamyl-tRNA(Gln) amidotransferase subunit A (496 aa).

Residues K79 and S159 each act as charge relay system in the active site. S183 acts as the Acyl-ester intermediate in catalysis.

This sequence belongs to the amidase family. GatA subfamily. Heterotrimer of A, B and C subunits.

It catalyses the reaction L-glutamyl-tRNA(Gln) + L-glutamine + ATP + H2O = L-glutaminyl-tRNA(Gln) + L-glutamate + ADP + phosphate + H(+). Its function is as follows. Allows the formation of correctly charged Gln-tRNA(Gln) through the transamidation of misacylated Glu-tRNA(Gln) in organisms which lack glutaminyl-tRNA synthetase. The reaction takes place in the presence of glutamine and ATP through an activated gamma-phospho-Glu-tRNA(Gln). In Ruegeria pomeroyi (strain ATCC 700808 / DSM 15171 / DSS-3) (Silicibacter pomeroyi), this protein is Glutamyl-tRNA(Gln) amidotransferase subunit A.